Reading from the N-terminus, the 309-residue chain is MLKQRTLKKEISATGVGLHSGDKVTLTLRPAAPDTGIVFRRIDLPDTAEFKVQPHLVTDTKLCSALECNGARVATIEHLMSALAGLGIDNIRIELNAGEVPIMDGSAGPFVFLLQQAGIVEQDAMKKFIRIKKTVEYREGDKWVRFDPYFGFKLDFTIDFNHPAVEHTGQRITIDFADNSYIKEISRARTFGFMHEVEALRSMGLARGGSLDNAIVLDEFRVLNSDGLRYDDEFVKHKMLDAIGDLYVLGHPLIGAFSAYKAGHYMNNQLLRALLADGDAWEYATFAKIEEAPGAFRNPIGLPPALQYV.

Residues His78, His237, and Asp241 each coordinate Zn(2+). His264 functions as the Proton donor in the catalytic mechanism.

Belongs to the LpxC family. Zn(2+) serves as cofactor.

It catalyses the reaction a UDP-3-O-[(3R)-3-hydroxyacyl]-N-acetyl-alpha-D-glucosamine + H2O = a UDP-3-O-[(3R)-3-hydroxyacyl]-alpha-D-glucosamine + acetate. It functions in the pathway glycolipid biosynthesis; lipid IV(A) biosynthesis; lipid IV(A) from (3R)-3-hydroxytetradecanoyl-[acyl-carrier-protein] and UDP-N-acetyl-alpha-D-glucosamine: step 2/6. Its function is as follows. Catalyzes the hydrolysis of UDP-3-O-myristoyl-N-acetylglucosamine to form UDP-3-O-myristoylglucosamine and acetate, the committed step in lipid A biosynthesis. The chain is UDP-3-O-acyl-N-acetylglucosamine deacetylase from Methylobacillus flagellatus (strain ATCC 51484 / DSM 6875 / VKM B-1610 / KT).